A 243-amino-acid chain; its full sequence is DNA repair protein RecO (243 aa).

Belongs to the RecO family.

Involved in DNA repair and RecF pathway recombination. In Beutenbergia cavernae (strain ATCC BAA-8 / DSM 12333 / CCUG 43141 / JCM 11478 / NBRC 16432 / NCIMB 13614 / HKI 0122), this protein is DNA repair protein RecO.